The primary structure comprises 1470 residues: Membrane-associated guanylate kinase, WW and PDZ domain-containing protein 3 (1470 aa).

One can recognise a PDZ 1 domain in the interval 18–108; sequence CAVSWAGPPG…PIRLKTVKPG (91 aa). The interval 18-108 is interaction with ADRB1 and TGFA; the sequence is CAVSWAGPPG…PIRLKTVKPG (91 aa). The Guanylate kinase-like domain occupies 116-290; sequence RHYLSLQFQK…RSMDFRNYMM (175 aa). Residue 123-130 coordinates ATP; that stretch reads FQKGSIDH. The tract at residues 184 to 266 is disordered; it reads TYDGNFYGTP…ETREMHSESS (83 aa). Residues 193–204 are compositionally biased toward pro residues; the sequence is PKPPAEPSPFQP. Phosphoserine is present on S236. The span at 238-247 shows a compositional bias: acidic residues; sequence LPEEEEDEDK. WW domains lie at 296-329 and 342-375; these read EPLP…DPRL and GELP…NPVE. One can recognise a PDZ 2 domain in the interval 413–495; it reads RASLKKSTMG…NQYVNLTLCR (83 aa). The tract at residues 413–495 is interaction with PTEN; it reads RASLKKSTMG…NQYVNLTLCR (83 aa). A disordered region spans residues 550 to 575; the sequence is LLSSDRLNGPSDSNEQRASLASSGSS. A compositionally biased stretch (polar residues) spans 559–575; it reads PSDSNEQRASLASSGSS. One can recognise a PDZ 3 domain in the interval 581–657; sequence TIPLVKGPKG…GADVPLLILR (77 aa). Phosphoserine is present on S598. The interval 665-700 is disordered; sequence KTAKMKTDTKETSGSLETINEPTPQPMPFPPSIIRS. A compositionally biased stretch (polar residues) spans 676 to 686; sequence TSGSLETINEP. Position 702 is a phosphoserine (S702). The PDZ 4 domain occupies 729 to 811; the sequence is DVFLRKQESG…NGHVLLTVRR (83 aa). The interval 729 to 811 is interaction with ADGRB1; it reads DVFLRKQESG…NGHVLLTVRR (83 aa). The segment at 818 to 847 is disordered; sequence KQPEDESPQAFSQSGSPRLNRTELPTRSAP. Residues 826-847 show a composition bias toward polar residues; that stretch reads QAFSQSGSPRLNRTELPTRSAP. 2 positions are modified to phosphoserine: S833 and S916. Positions 852–939 constitute a PDZ 5 domain; that stretch reads DVILQRKENE…TVTLTVVAEE (88 aa). Residues 852-939 are interaction with LPAR2 and GRIN2B; it reads DVILQRKENE…TVTLTVVAEE (88 aa). The tract at residues 939 to 976 is disordered; sequence EEHHGPPSGTNSARQSPALQHRPMGQAQATHIPGDRTA. The segment covering 946 to 956 has biased composition (polar residues); it reads SGTNSARQSPA. The region spanning 1022 to 1104 is the PDZ 6 domain; that stretch reads PVELERGPRG…KVLLLLRPGT (83 aa). Disordered regions lie at residues 1124 to 1146 and 1167 to 1470; these read IYDE…ESHV and DTVQ…DKQL. Polar residues predominate over residues 1175 to 1191; it reads TLNGSQPEMKYQSIQKN. 2 stretches are compositionally biased toward basic and acidic residues: residues 1193 to 1209 and 1230 to 1263; these read SKKD…KNLL and RHSE…KGEN. Positions 1285–1304 are enriched in polar residues; sequence SSSPRKQQKIGGNSLSNTEG. S1321 bears the Phosphoserine mark. Composition is skewed to basic and acidic residues over residues 1326 to 1340, 1350 to 1361, 1377 to 1397, and 1422 to 1431; these read PEGK…KDLK, RSPEKRSSKVDE, VSEK…DKTG, and EVTDRGKERA.

This sequence belongs to the MAGUK family. In terms of assembly, interacts with ADRB1, ADGRB1, LPAR2/EDG4, FZD4, FZD7, GRIN2B, TGFA and VANGL2. Interacts with PTEN. Interacts with ADRB1, PTPRB and unidentified tyrosine phosphorylated proteins. Interacts with DLL1. Interacts with PRRG4 (via cytoplasmic domain).

It is found in the cell membrane. It localises to the cell junction. The protein localises to the tight junction. Its subcellular location is the nucleus. Its function is as follows. Acts as a scaffolding protein at cell-cell junctions, thereby regulating various cellular and signaling processes. Cooperates with PTEN to modulate the kinase activity of AKT1. Its interaction with PTPRB and tyrosine phosphorylated proteins suggests that it may link receptor tyrosine phosphatase with its substrates at the plasma membrane. In polarized epithelial cells, involved in efficient trafficking of TGFA to the cell surface. Regulates the ability of LPAR2 to activate ERK and RhoA pathways. Regulates the JNK signaling cascade via its interaction with FZD4 and VANGL2. This chain is Membrane-associated guanylate kinase, WW and PDZ domain-containing protein 3 (Magi3), found in Rattus norvegicus (Rat).